A 706-amino-acid polypeptide reads, in one-letter code: D-(-)-3-hydroxybutyrate oligomer hydrolase (706 aa).

Residues 1-27 (MTIIIAGKNTLTLTSLAAAVLALGACG) form the signal peptide. Residue Ser-311 is the Charge relay system of the active site.

The protein belongs to the D-(-)-3-hydroxybutyrate oligomer hydrolase family.

It is found in the secreted. The enzyme catalyses (3R)-hydroxybutanoate dimer + H2O = 2 (R)-3-hydroxybutanoate + H(+). It functions in the pathway lipid metabolism; butanoate metabolism. In terms of biological role, participates in the degradation of poly-3-hydroxybutyrate (PHB). It works downstream of poly(3-hydroxybutyrate) depolymerase, hydrolyzing D(-)-3-hydroxybutyrate oligomers of various length (3HB-oligomers) into 3HB-monomers. This Polaromonas naphthalenivorans (strain CJ2) protein is D-(-)-3-hydroxybutyrate oligomer hydrolase.